The following is a 438-amino-acid chain: Protein phosphatase 2C homolog 2 (438 aa).

The region spanning 23-294 is the PPM-type phosphatase domain; it reads IYGVSAMQGW…DNMTMVIIGF (272 aa). Mn(2+) is bound by residues Asp67, Gly68, Asp236, and Asp285. The interval 370–438 is disordered; it reads VLTGSDDTEM…EKTPEESKKD (69 aa). Residues 375-387 show a composition bias toward acidic residues; it reads DDTEMFDNADEDK. The span at 398-438 shows a compositional bias: basic and acidic residues; that stretch reads GKTDAKEETEAKPAPEAESSKPADGSEKKQDEKTPEESKKD.

It belongs to the PP2C family. Mg(2+) is required as a cofactor. Requires Mn(2+) as cofactor.

It is found in the cytoplasm. The protein localises to the nucleus. It catalyses the reaction O-phospho-L-seryl-[protein] + H2O = L-seryl-[protein] + phosphate. It carries out the reaction O-phospho-L-threonyl-[protein] + H2O = L-threonyl-[protein] + phosphate. Functionally, dephosphorylating regulator for many key proteins. Negatively regulates the endoplasmic reticulum unfolded protein response. This is Protein phosphatase 2C homolog 2 from Hypocrea jecorina (strain QM6a) (Trichoderma reesei).